Consider the following 119-residue polypeptide: Large ribosomal subunit protein bL20 (119 aa).

The protein belongs to the bacterial ribosomal protein bL20 family.

In terms of biological role, binds directly to 23S ribosomal RNA and is necessary for the in vitro assembly process of the 50S ribosomal subunit. It is not involved in the protein synthesizing functions of that subunit. The protein is Large ribosomal subunit protein bL20 of Xylella fastidiosa (strain M12).